Consider the following 437-residue polypeptide: Glutamate-1-semialdehyde 2,1-aminomutase (437 aa).

The residue at position 274 (lysine 274) is an N6-(pyridoxal phosphate)lysine.

The protein belongs to the class-III pyridoxal-phosphate-dependent aminotransferase family. HemL subfamily. In terms of assembly, homodimer. Pyridoxal 5'-phosphate is required as a cofactor.

It localises to the cytoplasm. It catalyses the reaction (S)-4-amino-5-oxopentanoate = 5-aminolevulinate. Its pathway is porphyrin-containing compound metabolism; protoporphyrin-IX biosynthesis; 5-aminolevulinate from L-glutamyl-tRNA(Glu): step 2/2. The protein is Glutamate-1-semialdehyde 2,1-aminomutase of Paracidovorax citrulli (strain AAC00-1) (Acidovorax citrulli).